The following is a 313-amino-acid chain: Methionyl-tRNA formyltransferase (313 aa).

109–112 (SLLP) provides a ligand contact to (6S)-5,6,7,8-tetrahydrofolate.

This sequence belongs to the Fmt family.

It carries out the reaction L-methionyl-tRNA(fMet) + (6R)-10-formyltetrahydrofolate = N-formyl-L-methionyl-tRNA(fMet) + (6S)-5,6,7,8-tetrahydrofolate + H(+). Its function is as follows. Attaches a formyl group to the free amino group of methionyl-tRNA(fMet). The formyl group appears to play a dual role in the initiator identity of N-formylmethionyl-tRNA by promoting its recognition by IF2 and preventing the misappropriation of this tRNA by the elongation apparatus. The protein is Methionyl-tRNA formyltransferase of Thermotoga maritima (strain ATCC 43589 / DSM 3109 / JCM 10099 / NBRC 100826 / MSB8).